Consider the following 309-residue polypeptide: 4-hydroxy-3-methylbut-2-enyl diphosphate reductase (309 aa).

Position 12 (C12) interacts with [4Fe-4S] cluster. The (2E)-4-hydroxy-3-methylbut-2-enyl diphosphate site is built by H43 and H77. Positions 43 and 77 each coordinate dimethylallyl diphosphate. Isopentenyl diphosphate contacts are provided by H43 and H77. C99 lines the [4Fe-4S] cluster pocket. H127 is a binding site for (2E)-4-hydroxy-3-methylbut-2-enyl diphosphate. A dimethylallyl diphosphate-binding site is contributed by H127. H127 is a binding site for isopentenyl diphosphate. E129 serves as the catalytic Proton donor. T167 provides a ligand contact to (2E)-4-hydroxy-3-methylbut-2-enyl diphosphate. C197 is a [4Fe-4S] cluster binding site. (2E)-4-hydroxy-3-methylbut-2-enyl diphosphate-binding residues include S225, S226, N227, and S269. S225, S226, N227, and S269 together coordinate dimethylallyl diphosphate. Positions 225, 226, 227, and 269 each coordinate isopentenyl diphosphate.

The protein belongs to the IspH family. [4Fe-4S] cluster serves as cofactor.

The catalysed reaction is isopentenyl diphosphate + 2 oxidized [2Fe-2S]-[ferredoxin] + H2O = (2E)-4-hydroxy-3-methylbut-2-enyl diphosphate + 2 reduced [2Fe-2S]-[ferredoxin] + 2 H(+). The enzyme catalyses dimethylallyl diphosphate + 2 oxidized [2Fe-2S]-[ferredoxin] + H2O = (2E)-4-hydroxy-3-methylbut-2-enyl diphosphate + 2 reduced [2Fe-2S]-[ferredoxin] + 2 H(+). The protein operates within isoprenoid biosynthesis; dimethylallyl diphosphate biosynthesis; dimethylallyl diphosphate from (2E)-4-hydroxy-3-methylbutenyl diphosphate: step 1/1. It functions in the pathway isoprenoid biosynthesis; isopentenyl diphosphate biosynthesis via DXP pathway; isopentenyl diphosphate from 1-deoxy-D-xylulose 5-phosphate: step 6/6. Catalyzes the conversion of 1-hydroxy-2-methyl-2-(E)-butenyl 4-diphosphate (HMBPP) into a mixture of isopentenyl diphosphate (IPP) and dimethylallyl diphosphate (DMAPP). Acts in the terminal step of the DOXP/MEP pathway for isoprenoid precursor biosynthesis. The sequence is that of 4-hydroxy-3-methylbut-2-enyl diphosphate reductase from Wolbachia pipientis wMel.